The following is a 256-amino-acid chain: MYQVDLNSDIGESFGAYELGMDGEVVKYITSANIACGWHAGDPMVMEKTVQAAIRNKVAIGAHPGFPDLMGFGRRNMVVTQEEAKAYVKYQIGALWAFTKAAGVAIQHVKPHGALYNMAAKDEGLAKAIAEAVYEIDPNIILVGLANSKMTEVGEKLGLKVAHEVFADRAYNSDGTLVSRNTKGAVIHDSDLAVARVVRMIKKGKVEAINGEDVSIKAHSICVHGDNEHALEFVNKIRETLGKEEIQVISMDALLK.

It belongs to the LamB/PxpA family. Forms a complex composed of PxpA, PxpB and PxpC.

The catalysed reaction is 5-oxo-L-proline + ATP + 2 H2O = L-glutamate + ADP + phosphate + H(+). Catalyzes the cleavage of 5-oxoproline to form L-glutamate coupled to the hydrolysis of ATP to ADP and inorganic phosphate. This is 5-oxoprolinase subunit A from Alkaliphilus metalliredigens (strain QYMF).